The chain runs to 340 residues: DNA repair protein RAD51 homolog A (340 aa).

Residues 1–14 show a composition bias toward low complexity; the sequence is MSSAAQQQQKAAAA. The disordered stretch occupies residues 1–21; that stretch reads MSSAAQQQQKAAAAEQEEVEH. Residues 49-78 enclose the HhH domain; that stretch reads TVEAVAYTPRKDLLQIKGISEAKADKIIEA. 128 to 135 lines the ATP pocket; the sequence is GEFRSGKT.

The protein belongs to the RecA family. RAD51 subfamily. Self-associates and may interact with XRCC3 homolog. Highly expressed in mitotic and meiotic tissues, but low levels in differentiated tissues.

The protein localises to the nucleus. Its function is as follows. Binds to single and double-stranded DNA and exhibits DNA-dependent ATPase activity. Unwinds duplex DNA. Component of the meiotic recombination pathway. Seems to play a role in mediating chromosome homology search, chromosome pairing and synapsis at early stages and probably chromosome crossing-over at later stages in meiosis. Probably is involved in the repair of meiotic double strand breaks (DBSs) and in homologous recombination. The protein is DNA repair protein RAD51 homolog A (RAD51A) of Zea mays (Maize).